The following is a 51-amino-acid chain: Sperm protamine P1 (51 aa).

The protein belongs to the protamine P1 family. Testis.

It is found in the nucleus. The protein resides in the chromosome. Its function is as follows. Protamines substitute for histones in the chromatin of sperm during the haploid phase of spermatogenesis. They compact sperm DNA into a highly condensed, stable and inactive complex. In Nasalis larvatus (Proboscis monkey), this protein is Sperm protamine P1 (PRM1).